Consider the following 199-residue polypeptide: Transcriptional regulatory protein EntR (199 aa).

The 122-residue stretch at 3–124 (KILVIDRCHF…TLSHTIQEAL (122 aa)) folds into the Response regulatory domain. A 4-aspartylphosphate modification is found at D8. The region spanning 133 to 198 (PKNATPLLTP…SPFLSLPGKG (66 aa)) is the HTH luxR-type domain. The segment at residues 157-176 (NNAIAAALSIHGKTVYTYKR) is a DNA-binding region (H-T-H motif).

May serve to repress the entericidin locus in C.freundii. In Citrobacter freundii, this protein is Transcriptional regulatory protein EntR (ecnR).